The chain runs to 283 residues: ATP phosphoribosyltransferase (283 aa).

This sequence belongs to the ATP phosphoribosyltransferase family. Long subfamily. Mg(2+) serves as cofactor.

The protein resides in the cytoplasm. It catalyses the reaction 1-(5-phospho-beta-D-ribosyl)-ATP + diphosphate = 5-phospho-alpha-D-ribose 1-diphosphate + ATP. The protein operates within amino-acid biosynthesis; L-histidine biosynthesis; L-histidine from 5-phospho-alpha-D-ribose 1-diphosphate: step 1/9. Its activity is regulated as follows. Feedback inhibited by histidine. Its function is as follows. Catalyzes the condensation of ATP and 5-phosphoribose 1-diphosphate to form N'-(5'-phosphoribosyl)-ATP (PR-ATP). Has a crucial role in the pathway because the rate of histidine biosynthesis seems to be controlled primarily by regulation of HisG enzymatic activity. This chain is ATP phosphoribosyltransferase, found in Phocaeicola vulgatus (strain ATCC 8482 / DSM 1447 / JCM 5826 / CCUG 4940 / NBRC 14291 / NCTC 11154) (Bacteroides vulgatus).